Reading from the N-terminus, the 118-residue chain is Small ribosomal subunit protein uS13 (118 aa).

Residues 93-118 are disordered; that stretch reads KKLPVRGQRTKTNARTRKGPRKLMKK.

This sequence belongs to the universal ribosomal protein uS13 family. As to quaternary structure, part of the 30S ribosomal subunit. Forms a loose heterodimer with protein S19. Forms two bridges to the 50S subunit in the 70S ribosome.

Located at the top of the head of the 30S subunit, it contacts several helices of the 16S rRNA. In the 70S ribosome it contacts the 23S rRNA (bridge B1a) and protein L5 of the 50S subunit (bridge B1b), connecting the 2 subunits; these bridges are implicated in subunit movement. Contacts the tRNAs in the A and P-sites. The chain is Small ribosomal subunit protein uS13 from Buchnera aphidicola subsp. Baizongia pistaciae (strain Bp).